The chain runs to 302 residues: MGDIRKIVFEENKLEKKLCRLVGQAICDFGMIEDGDKVMVCVSGGKDSYAMLDLLMKLRERAPINFEIVAVNLDQKQPNFPTNILPNYLKSLDIQYHIEEQDTYSIVKRVIPDGKTTCGLCSRLRRGILYRVADELGATKIALGHHRDDILETLMLNMFYAGKLKGMPPKLRSDDGKHIVIRPLAYVPEKLLERYSADMNFPIIPCDLCGSQPNLQRQVMKEMLRDWEKKHPGRVENLFRSMHHIVPSHLMDGEAFDFKNLEISSELSGIAARSSGDRAIDEADLDELACGTLIQGTYNPPL.

The short motif at Ser43 to Ser48 is the PP-loop motif element. Residues Cys118, Cys121, and Cys209 each contribute to the [4Fe-4S] cluster site.

It belongs to the TtcA family. Homodimer. The cofactor is Mg(2+). Requires [4Fe-4S] cluster as cofactor.

Its subcellular location is the cytoplasm. It carries out the reaction cytidine(32) in tRNA + S-sulfanyl-L-cysteinyl-[cysteine desulfurase] + AH2 + ATP = 2-thiocytidine(32) in tRNA + L-cysteinyl-[cysteine desulfurase] + A + AMP + diphosphate + H(+). It functions in the pathway tRNA modification. Catalyzes the ATP-dependent 2-thiolation of cytidine in position 32 of tRNA, to form 2-thiocytidine (s(2)C32). The sulfur atoms are provided by the cysteine/cysteine desulfurase (IscS) system. This is tRNA-cytidine(32) 2-sulfurtransferase from Polynucleobacter necessarius subsp. necessarius (strain STIR1).